We begin with the raw amino-acid sequence, 617 residues long: Dihydroxy-acid dehydratase (617 aa).

Aspartate 81 lines the Mg(2+) pocket. Cysteine 122 is a binding site for [2Fe-2S] cluster. Mg(2+) contacts are provided by aspartate 123 and lysine 124. Lysine 124 bears the N6-carboxylysine mark. Cysteine 195 serves as a coordination point for [2Fe-2S] cluster. A Mg(2+)-binding site is contributed by glutamate 491. Serine 517 acts as the Proton acceptor in catalysis.

It belongs to the IlvD/Edd family. In terms of assembly, homodimer. Requires [2Fe-2S] cluster as cofactor. It depends on Mg(2+) as a cofactor.

The enzyme catalyses (2R)-2,3-dihydroxy-3-methylbutanoate = 3-methyl-2-oxobutanoate + H2O. The catalysed reaction is (2R,3R)-2,3-dihydroxy-3-methylpentanoate = (S)-3-methyl-2-oxopentanoate + H2O. The protein operates within amino-acid biosynthesis; L-isoleucine biosynthesis; L-isoleucine from 2-oxobutanoate: step 3/4. Its pathway is amino-acid biosynthesis; L-valine biosynthesis; L-valine from pyruvate: step 3/4. Its function is as follows. Functions in the biosynthesis of branched-chain amino acids. Catalyzes the dehydration of (2R,3R)-2,3-dihydroxy-3-methylpentanoate (2,3-dihydroxy-3-methylvalerate) into 2-oxo-3-methylpentanoate (2-oxo-3-methylvalerate) and of (2R)-2,3-dihydroxy-3-methylbutanoate (2,3-dihydroxyisovalerate) into 2-oxo-3-methylbutanoate (2-oxoisovalerate), the penultimate precursor to L-isoleucine and L-valine, respectively. This Hydrogenovibrio crunogenus (strain DSM 25203 / XCL-2) (Thiomicrospira crunogena) protein is Dihydroxy-acid dehydratase.